The following is a 268-amino-acid chain: Phosphonates import ATP-binding protein PhnC (268 aa).

Residues 11 to 254 (LHAEAVTKRF…EVMAIYQRAE (244 aa)) enclose the ABC transporter domain. ATP is bound at residue 43 to 50 (GLSGSGKS).

It belongs to the ABC transporter superfamily. Phosphonates importer (TC 3.A.1.9.1) family. The complex is composed of two ATP-binding proteins (PhnC), two transmembrane proteins (PhnE) and a solute-binding protein (PhnD).

Its subcellular location is the cell membrane. The enzyme catalyses phosphonate(out) + ATP + H2O = phosphonate(in) + ADP + phosphate + H(+). Functionally, part of the ABC transporter complex PhnCDE involved in phosphonates import. Responsible for energy coupling to the transport system. The protein is Phosphonates import ATP-binding protein PhnC of Nocardia farcinica (strain IFM 10152).